We begin with the raw amino-acid sequence, 290 residues long: Acetyl-coenzyme A carboxylase carboxyl transferase subunit beta (290 aa).

Residues 28 to 290 (LMNKCSKCGT…TVREGLSHGG (263 aa)) enclose the CoA carboxyltransferase N-terminal domain. Cysteine 32, cysteine 35, cysteine 51, and cysteine 54 together coordinate Zn(2+). The segment at 32-54 (CSKCGTIQYSKELDKNLKVCSSC) adopts a C4-type zinc-finger fold.

The protein belongs to the AccD/PCCB family. In terms of assembly, acetyl-CoA carboxylase is a heterohexamer composed of biotin carboxyl carrier protein (AccB), biotin carboxylase (AccC) and two subunits each of ACCase subunit alpha (AccA) and ACCase subunit beta (AccD). Requires Zn(2+) as cofactor.

It localises to the cytoplasm. It carries out the reaction N(6)-carboxybiotinyl-L-lysyl-[protein] + acetyl-CoA = N(6)-biotinyl-L-lysyl-[protein] + malonyl-CoA. It participates in lipid metabolism; malonyl-CoA biosynthesis; malonyl-CoA from acetyl-CoA: step 1/1. In terms of biological role, component of the acetyl coenzyme A carboxylase (ACC) complex. Biotin carboxylase (BC) catalyzes the carboxylation of biotin on its carrier protein (BCCP) and then the CO(2) group is transferred by the transcarboxylase to acetyl-CoA to form malonyl-CoA. In Paenibacillus sp. (strain JDR-2), this protein is Acetyl-coenzyme A carboxylase carboxyl transferase subunit beta.